The chain runs to 312 residues: Apolipoprotein E (312 aa).

The first 18 residues, 1-18 (MKALWALLLVPLLTGCLA), serve as a signal peptide directing secretion. 8 repeat units span residues 72–93 (VLME…EQLG), 94–115 (PVAE…ARLG), 116–137 (ADME…TMLG), 138–159 (QSTE…KRLM), 160–181 (RDAD…EGAE), 182–203 (RGVS…QRTA), 204–225 (NLGA…DRIR), and 226–247 (GRLE…EQME). Positions 72–247 (VLMEDTMTEV…RLEEVREQME (176 aa)) are 8 X 22 AA approximate tandem repeats. Position 135 is a methionine sulfoxide (Met-135). Ser-139 carries the phosphoserine modification. Residues 150–160 (HLRKMRKRLMR) form an LDL and other lipoprotein receptors binding region. The LDL receptor binding stretch occupies residues 150-160 (HLRKMRKRLMR). Position 154–157 (154–157 (MRKR)) interacts with heparin. Residues 202–282 (TANLGAGAAQ…GWFEPLVEDM (81 aa)) are lipid-binding and lipoprotein association. A heparin-binding site is contributed by 221–228 (SDRIRGRL). Residues 258 to 312 (QQIRLQAEIFQARIKGWFEPLVEDMQRQWANLMEKIQASVATNSIASTTVPLENQ) form a homooligomerization region. A specificity for association with VLDL region spans residues 270-282 (RIKGWFEPLVEDM).

The protein belongs to the apolipoprotein A1/A4/E family. As to quaternary structure, homotetramer. May interact with ABCA1; functionally associated with ABCA1 in the biogenesis of HDLs. May interact with APP/A4 amyloid-beta peptide; the interaction is extremely stable in vitro but its physiological significance is unclear. May interact with MAPT. May interact with MAP2. In the cerebrospinal fluid, interacts with secreted SORL1. Interacts with PMEL; this allows the loading of PMEL luminal fragment on ILVs to induce fibril nucleation. Post-translationally, APOE exists as multiple glycosylated and sialylated glycoforms within cells and in plasma. The extent of glycosylation and sialylation are tissue and context specific. Glycated in plasma VLDL. In terms of processing, phosphorylated by FAM20C in the extracellular medium.

The protein localises to the secreted. It localises to the extracellular space. It is found in the extracellular matrix. The protein resides in the extracellular vesicle. Its subcellular location is the endosome. The protein localises to the multivesicular body. APOE is an apolipoprotein, a protein associating with lipid particles, that mainly functions in lipoprotein-mediated lipid transport between organs via the plasma and interstitial fluids. APOE is a core component of plasma lipoproteins and is involved in their production, conversion and clearance. Apolipoproteins are amphipathic molecules that interact both with lipids of the lipoprotein particle core and the aqueous environment of the plasma. As such, APOE associates with chylomicrons, chylomicron remnants, very low density lipoproteins (VLDL) and intermediate density lipoproteins (IDL) but shows a preferential binding to high-density lipoproteins (HDL). It also binds a wide range of cellular receptors including the LDL receptor/LDLR and the very low-density lipoprotein receptor/VLDLR that mediate the cellular uptake of the APOE-containing lipoprotein particles. Finally, APOE also has a heparin-binding activity and binds heparan-sulfate proteoglycans on the surface of cells, a property that supports the capture and the receptor-mediated uptake of APOE-containing lipoproteins by cells. The sequence is that of Apolipoprotein E (Apoe) from Rattus norvegicus (Rat).